A 374-amino-acid chain; its full sequence is UDP-N-acetylglucosamine--N-acetylmuramyl-(pentapeptide) pyrophosphoryl-undecaprenol N-acetylglucosamine transferase (374 aa).

UDP-N-acetyl-alpha-D-glucosamine contacts are provided by residues 14-16, Asn125, Arg168, Ser196, and Gln297; that span reads TGG.

The protein belongs to the glycosyltransferase 28 family. MurG subfamily.

Its subcellular location is the cell inner membrane. The enzyme catalyses di-trans,octa-cis-undecaprenyl diphospho-N-acetyl-alpha-D-muramoyl-L-alanyl-D-glutamyl-meso-2,6-diaminopimeloyl-D-alanyl-D-alanine + UDP-N-acetyl-alpha-D-glucosamine = di-trans,octa-cis-undecaprenyl diphospho-[N-acetyl-alpha-D-glucosaminyl-(1-&gt;4)]-N-acetyl-alpha-D-muramoyl-L-alanyl-D-glutamyl-meso-2,6-diaminopimeloyl-D-alanyl-D-alanine + UDP + H(+). The protein operates within cell wall biogenesis; peptidoglycan biosynthesis. Functionally, cell wall formation. Catalyzes the transfer of a GlcNAc subunit on undecaprenyl-pyrophosphoryl-MurNAc-pentapeptide (lipid intermediate I) to form undecaprenyl-pyrophosphoryl-MurNAc-(pentapeptide)GlcNAc (lipid intermediate II). The protein is UDP-N-acetylglucosamine--N-acetylmuramyl-(pentapeptide) pyrophosphoryl-undecaprenol N-acetylglucosamine transferase of Rhodopseudomonas palustris (strain BisA53).